The following is a 466-amino-acid chain: Putative chitinase (466 aa).

The first 17 residues, 1–17 (MYLTIWLVSILALGTWG), serve as a signal peptide directing secretion. The 361-residue stretch at 20–380 (FNRFCHYNSW…MAVIHGLNAY (361 aa)) folds into the GH18 domain. Cysteine 24 and cysteine 49 form a disulfide bridge. Glutamate 141 (proton donor) is an active-site residue. The stretch at 408-442 (NYRRRNQQEKVAEMEQRIRHLEQELQQSMGNMAYE) forms a coiled coil.

This sequence belongs to the glycosyl hydrolase 18 family. In terms of tissue distribution, prismatic layer of shell (at protein level). Expressed primarily in the mantle with highest level in the mantle edge and lower level in the mantle pallium.

It localises to the secreted. The enzyme catalyses Random endo-hydrolysis of N-acetyl-beta-D-glucosaminide (1-&gt;4)-beta-linkages in chitin and chitodextrins.. The polypeptide is Putative chitinase (Pinctada maxima (Silver-lipped pearl oyster)).